The following is a 360-amino-acid chain: MKTSMQRKLDQLTTRLAELNDLLSREDITSNLDQYRKLTREHAELGPVVEHYALWRQAMNDAATAQELLADASMRDFAEEEIRAARERMDKLGAELQKMLLPKDPNDDRNIFLEIRAGTGGDESALFAGDLLRMYLRYAERNRWQVEMMSASESDLGGYKEVIVRIAGEAAYSKLKFESGGHRVQRVPATETQGRIHTSACTVAVMPEADEIGEVEINPADLRIDTFRASGAGGQHINKTDSAVRVTHLPTGIVVECQDDRSQHKNKDRALKVLAARIKDKQSHEQQAKEAATRKSLIGSGDRSERIRTYNFPQGRLTDHRINLTLYRLDAIMDGDLDELIAALVSEHQAELLASLGDAD.

Residue Gln235 is modified to N5-methylglutamine. Basic and acidic residues predominate over residues 280-293 (DKQSHEQQAKEAAT). Residues 280–300 (DKQSHEQQAKEAATRKSLIGS) form a disordered region.

This sequence belongs to the prokaryotic/mitochondrial release factor family. Methylated by PrmC. Methylation increases the termination efficiency of RF1.

It localises to the cytoplasm. Functionally, peptide chain release factor 1 directs the termination of translation in response to the peptide chain termination codons UAG and UAA. In Paraburkholderia xenovorans (strain LB400), this protein is Peptide chain release factor 1.